The sequence spans 185 residues: p53 apoptosis effector related to PMP-22 (185 aa).

4 consecutive transmembrane segments (helical) span residues 13-33 (WILPMLLLFAIIFDIIAIAAQ), 74-94 (VAALMIIGLIILIFAFIISLV), 105-125 (LPFIGLLLILAVIVQIIALII), and 143-163 (WAYGFGWGATILTLGCAILFC).

Belongs to the TMEM47 family.

Its subcellular location is the cell junction. The protein localises to the desmosome. It is found in the cell membrane. The protein resides in the cytoplasm. In terms of biological role, component of intercellular desmosome junctions. Positively regulates apoptosis in the early-stage embryo in response to UV irradiation, this is partially dependent on tp53 activation. Required for the survival of cell populations in the developing notochord and skin, therefore required for normal embryogenesis beyond 30 hpf. Acts as a positive regulator of endothelial cell apoptosis in response to blood flow-derived shear stress. The sequence is that of p53 apoptosis effector related to PMP-22 from Danio rerio (Zebrafish).